Consider the following 112-residue polypeptide: Protein lin-52 homolog (112 aa).

This sequence belongs to the lin-52 family. In terms of assembly, component of the DREAM complex.

The chain is Protein lin-52 homolog (lin52) from Tetraodon nigroviridis (Spotted green pufferfish).